The chain runs to 61 residues: Conotoxin TeAr154 (61 aa).

The signal sequence occupies residues 1–19; sequence MHCLPVFVILLLLTASGLS. A propeptide spanning residues 20-47 is cleaved from the precursor; sequence VDARPKTEDDVPLSSFRDNTKSTLQRLL. Glu57 is modified (4-carboxyglutamate).

Post-translationally, contains 2 disulfide bonds that can be either 'C1-C3, C2-C4' or 'C1-C4, C2-C3', since these disulfide connectivities have been observed for conotoxins with cysteine framework V (for examples, see AC P0DQQ7 and AC P81755). In terms of processing, contains 2 disulfide bonds. As to expression, expressed by the venom duct.

It localises to the secreted. This chain is Conotoxin TeAr154, found in Conus textile (Cloth-of-gold cone).